Consider the following 283-residue polypeptide: Pantothenate synthetase (283 aa).

ATP is bound at residue 30–37 (MGALHRGH). The Proton donor role is filled by His-37. Residue Gln-61 participates in (R)-pantoate binding. Gln-61 contacts beta-alanine. Residue 147 to 150 (GQKD) participates in ATP binding. Gln-153 is a (R)-pantoate binding site. Residues Ile-176 and 184–187 (MSSR) each bind ATP.

The protein belongs to the pantothenate synthetase family. In terms of assembly, homodimer.

The protein localises to the cytoplasm. It carries out the reaction (R)-pantoate + beta-alanine + ATP = (R)-pantothenate + AMP + diphosphate + H(+). It participates in cofactor biosynthesis; (R)-pantothenate biosynthesis; (R)-pantothenate from (R)-pantoate and beta-alanine: step 1/1. In terms of biological role, catalyzes the condensation of pantoate with beta-alanine in an ATP-dependent reaction via a pantoyl-adenylate intermediate. The sequence is that of Pantothenate synthetase from Cytophaga hutchinsonii (strain ATCC 33406 / DSM 1761 / CIP 103989 / NBRC 15051 / NCIMB 9469 / D465).